The chain runs to 206 residues: 2,3-bisphosphoglycerate-dependent phosphoglycerate mutase (206 aa).

Substrate-binding positions include 9–16, 22–23, arginine 61, 88–91, lysine 99, 115–116, and 159–160; these read RHGQSEWN, TG, ERNY, RR, and GN. Histidine 10 acts as the Tele-phosphohistidine intermediate in catalysis. The Proton donor/acceptor role is filled by glutamate 88.

This sequence belongs to the phosphoglycerate mutase family. BPG-dependent PGAM subfamily. Homodimer.

The catalysed reaction is (2R)-2-phosphoglycerate = (2R)-3-phosphoglycerate. The protein operates within carbohydrate degradation; glycolysis; pyruvate from D-glyceraldehyde 3-phosphate: step 3/5. Catalyzes the interconversion of 2-phosphoglycerate and 3-phosphoglycerate. The polypeptide is 2,3-bisphosphoglycerate-dependent phosphoglycerate mutase (Bartonella tribocorum (strain CIP 105476 / IBS 506)).